The primary structure comprises 448 residues: Serine--tRNA ligase (448 aa).

255–257 contributes to the L-serine binding site; the sequence is TSE. Residue 286–288 coordinates ATP; the sequence is RSE. Glu-309 contributes to the L-serine binding site. 373–376 provides a ligand contact to ATP; the sequence is EISS. Position 408 (Ser-408) interacts with L-serine.

This sequence belongs to the class-II aminoacyl-tRNA synthetase family. Type-1 seryl-tRNA synthetase subfamily. In terms of assembly, homodimer. The tRNA molecule binds across the dimer.

It is found in the cytoplasm. It catalyses the reaction tRNA(Ser) + L-serine + ATP = L-seryl-tRNA(Ser) + AMP + diphosphate + H(+). The catalysed reaction is tRNA(Sec) + L-serine + ATP = L-seryl-tRNA(Sec) + AMP + diphosphate + H(+). The protein operates within aminoacyl-tRNA biosynthesis; selenocysteinyl-tRNA(Sec) biosynthesis; L-seryl-tRNA(Sec) from L-serine and tRNA(Sec): step 1/1. Catalyzes the attachment of serine to tRNA(Ser). Is also able to aminoacylate tRNA(Sec) with serine, to form the misacylated tRNA L-seryl-tRNA(Sec), which will be further converted into selenocysteinyl-tRNA(Sec). The polypeptide is Serine--tRNA ligase (Bordetella petrii (strain ATCC BAA-461 / DSM 12804 / CCUG 43448)).